The following is a 480-amino-acid chain: Aspartyl/glutamyl-tRNA(Asn/Gln) amidotransferase subunit B (480 aa).

It belongs to the GatB/GatE family. GatB subfamily. In terms of assembly, heterotrimer of A, B and C subunits.

The enzyme catalyses L-glutamyl-tRNA(Gln) + L-glutamine + ATP + H2O = L-glutaminyl-tRNA(Gln) + L-glutamate + ADP + phosphate + H(+). The catalysed reaction is L-aspartyl-tRNA(Asn) + L-glutamine + ATP + H2O = L-asparaginyl-tRNA(Asn) + L-glutamate + ADP + phosphate + 2 H(+). In terms of biological role, allows the formation of correctly charged Asn-tRNA(Asn) or Gln-tRNA(Gln) through the transamidation of misacylated Asp-tRNA(Asn) or Glu-tRNA(Gln) in organisms which lack either or both of asparaginyl-tRNA or glutaminyl-tRNA synthetases. The reaction takes place in the presence of glutamine and ATP through an activated phospho-Asp-tRNA(Asn) or phospho-Glu-tRNA(Gln). The polypeptide is Aspartyl/glutamyl-tRNA(Asn/Gln) amidotransferase subunit B (Streptococcus pneumoniae (strain ATCC 700669 / Spain 23F-1)).